A 461-amino-acid polypeptide reads, in one-letter code: Photosystem II CP43 reaction center protein (461 aa).

Residues 1–2 constitute a propeptide that is removed on maturation; the sequence is ME. At threonine 3 the chain carries N-acetylthreonine. Threonine 3 bears the Phosphothreonine mark. 5 helical membrane-spanning segments follow: residues 57 to 81, 122 to 143, 166 to 188, 243 to 263, and 279 to 300; these read LFEV…PHLA, LLGP…KDRN, KALY…RKIT, KPFA…LSYS, and WFNN…ASQA. Glutamate 355 provides a ligand contact to [CaMn4O5] cluster. A helical transmembrane segment spans residues 435-459; that stretch reads RARAAAAGFEKGIDRDLEPVLFMTP.

This sequence belongs to the PsbB/PsbC family. PsbC subfamily. In terms of assembly, PSII is composed of 1 copy each of membrane proteins PsbA, PsbB, PsbC, PsbD, PsbE, PsbF, PsbH, PsbI, PsbJ, PsbK, PsbL, PsbM, PsbT, PsbX, PsbY, PsbZ, Psb30/Ycf12, at least 3 peripheral proteins of the oxygen-evolving complex and a large number of cofactors. It forms dimeric complexes. The cofactor is Binds multiple chlorophylls and provides some of the ligands for the Ca-4Mn-5O cluster of the oxygen-evolving complex. It may also provide a ligand for a Cl- that is required for oxygen evolution. PSII binds additional chlorophylls, carotenoids and specific lipids..

The protein localises to the plastid. It is found in the chloroplast thylakoid membrane. One of the components of the core complex of photosystem II (PSII). It binds chlorophyll and helps catalyze the primary light-induced photochemical processes of PSII. PSII is a light-driven water:plastoquinone oxidoreductase, using light energy to abstract electrons from H(2)O, generating O(2) and a proton gradient subsequently used for ATP formation. The polypeptide is Photosystem II CP43 reaction center protein (Nandina domestica (Heavenly bamboo)).